The primary structure comprises 644 residues: Exoribonuclease 2 (644 aa).

The region spanning 189–516 (RQDLTALNFV…NHRLLKAVIK (328 aa)) is the RNB domain. Residues 561–643 (DTRFAAEIID…DTRSIIARPA (83 aa)) enclose the S1 motif domain.

This sequence belongs to the RNR ribonuclease family. RNase II subfamily.

It localises to the cytoplasm. The catalysed reaction is Exonucleolytic cleavage in the 3'- to 5'-direction to yield nucleoside 5'-phosphates.. Involved in mRNA degradation. Hydrolyzes single-stranded polyribonucleotides processively in the 3' to 5' direction. This is Exoribonuclease 2 from Salmonella arizonae (strain ATCC BAA-731 / CDC346-86 / RSK2980).